A 129-amino-acid polypeptide reads, in one-letter code: Ribosome-binding factor A (129 aa).

The protein belongs to the RbfA family. In terms of assembly, monomer. Binds 30S ribosomal subunits, but not 50S ribosomal subunits or 70S ribosomes.

Its subcellular location is the cytoplasm. Its function is as follows. One of several proteins that assist in the late maturation steps of the functional core of the 30S ribosomal subunit. Associates with free 30S ribosomal subunits (but not with 30S subunits that are part of 70S ribosomes or polysomes). Required for efficient processing of 16S rRNA. May interact with the 5'-terminal helix region of 16S rRNA. The sequence is that of Ribosome-binding factor A from Thermomicrobium roseum (strain ATCC 27502 / DSM 5159 / P-2).